Consider the following 62-residue polypeptide: Photosystem II reaction center protein Z (62 aa).

The next 2 helical transmembrane spans lie at 8–28 (SVFA…VVLA) and 41–61 (FSGA…NSLI).

The protein belongs to the PsbZ family. In terms of assembly, PSII is composed of 1 copy each of membrane proteins PsbA, PsbB, PsbC, PsbD, PsbE, PsbF, PsbH, PsbI, PsbJ, PsbK, PsbL, PsbM, PsbT, PsbY, PsbZ, Psb30/Ycf12, at least 3 peripheral proteins of the oxygen-evolving complex and a large number of cofactors. It forms dimeric complexes.

The protein localises to the plastid. It localises to the chloroplast thylakoid membrane. Its function is as follows. May control the interaction of photosystem II (PSII) cores with the light-harvesting antenna, regulates electron flow through the 2 photosystem reaction centers. PSII is a light-driven water plastoquinone oxidoreductase, using light energy to abstract electrons from H(2)O, generating a proton gradient subsequently used for ATP formation. This is Photosystem II reaction center protein Z from Psilotum nudum (Whisk fern).